Reading from the N-terminus, the 528-residue chain is Tyrosine 3-monooxygenase (528 aa).

Ser19 bears the Phosphoserine; by CaMK2 mark. Residues 33–65 are disordered; it reads GQGAPGPSLTGSPWPGTAAPAASYTPTPRSPRF. Residues 47 to 59 are compositionally biased toward low complexity; it reads PGTAAPAASYTPT. Position 62 is a phosphoserine (Ser62). At Ser71 the chain carries Phosphoserine; by CaMK2 and PKA. Fe cation is bound by residues His361, His366, and Glu406. Ser502 bears the Phosphoserine mark.

This sequence belongs to the biopterin-dependent aromatic amino acid hydroxylase family. As to quaternary structure, homotetramer. Interacts (when phosphorylated at Ser-19) with YWHAG; one YWHAG dimer binds to one TH tetramer and this interaction may influence the phosphorylation and dephosphorylation of other sites. Interacts with NT5DC2; the interaction results in reduced phosphorylation and decreased catalytic activity of TH. Fe(2+) is required as a cofactor. Post-translationally, phosphorylated on Ser-19, Ser-62 and Ser-71 by several protein kinases with different site specificities. Phosphorylation at Ser-62 and Ser-71 leads to an increase of TH activity. Phosphorylation at Ser-71 activates the enzyme and also counteracts the feedback inhibition of TH by catecholamines. Phosphorylation of Ser-19 and Ser-62 triggers the proteasomal degradation of TH through the ubiquitin-proteasome pathway. Phosphorylation at Ser-62 facilitates transport of TH from the soma to the nerve terminals via the microtubule network. Phosphorylation at Ser-19 induces the high-affinity binding to the 14-3-3 protein YWHAG; this interaction may influence the phosphorylation and dephosphorylation of other sites. Ser-19 increases the phosphorylation at Ser-71 in a hierarchical manner, leading to increased activity. In terms of tissue distribution, mainly expressed in the brain and adrenal glands.

Its subcellular location is the cytoplasm. The protein resides in the perinuclear region. It localises to the nucleus. It is found in the cell projection. The protein localises to the axon. Its subcellular location is the cytoplasmic vesicle. The protein resides in the secretory vesicle. It localises to the synaptic vesicle. The enzyme catalyses (6R)-L-erythro-5,6,7,8-tetrahydrobiopterin + L-tyrosine + O2 = (4aS,6R)-4a-hydroxy-L-erythro-5,6,7,8-tetrahydrobiopterin + L-dopa. Its pathway is catecholamine biosynthesis; dopamine biosynthesis; dopamine from L-tyrosine: step 1/2. Inhibited in feedback fashion by the catecholamine neurotransmitters, especially by dopamine in competition with tetrahydrobiopterin. Phosphorylation of several Ser/Thr residues in the N-terminus regulates the catalytic activity. Ser-62 and Ser-71 are readily phosphorylated to activate the catalytic activity. A Cysteine modification induced by N-ethylmaleimide (NEM), inhibits tyrosine 3-monooxygenase activity through the modification of the Cys-207. Its function is as follows. Catalyzes the conversion of L-tyrosine to L-dihydroxyphenylalanine (L-Dopa), the rate-limiting step in the biosynthesis of catecholamines, dopamine, noradrenaline, and adrenaline. Uses tetrahydrobiopterin and molecular oxygen to convert tyrosine to L-Dopa. In addition to tyrosine, is able to catalyze the hydroxylation of phenylalanine and tryptophan with lower specificity. Positively regulates the regression of retinal hyaloid vessels during postnatal development. Lacks catalytic activity. This chain is Tyrosine 3-monooxygenase, found in Homo sapiens (Human).